A 209-amino-acid polypeptide reads, in one-letter code: Uracil phosphoribosyltransferase (209 aa).

5-phospho-alpha-D-ribose 1-diphosphate contacts are provided by residues Arg-79, Arg-104, and 131 to 139 (DPMLATGGS). Residues Ile-194 and 199–201 (GDA) each bind uracil. Asp-200 provides a ligand contact to 5-phospho-alpha-D-ribose 1-diphosphate.

It belongs to the UPRTase family. Mg(2+) serves as cofactor.

The enzyme catalyses UMP + diphosphate = 5-phospho-alpha-D-ribose 1-diphosphate + uracil. The protein operates within pyrimidine metabolism; UMP biosynthesis via salvage pathway; UMP from uracil: step 1/1. Its activity is regulated as follows. Allosterically activated by GTP. Its function is as follows. Catalyzes the conversion of uracil and 5-phospho-alpha-D-ribose 1-diphosphate (PRPP) to UMP and diphosphate. This chain is Uracil phosphoribosyltransferase, found in Citrifermentans bemidjiense (strain ATCC BAA-1014 / DSM 16622 / JCM 12645 / Bem) (Geobacter bemidjiensis).